The primary structure comprises 493 residues: D-glyceraldehyde dehydrogenase (NADP(+)) (493 aa).

Residues 70–92 (RAKELIEKNRAELENIIMEENGK) are a coiled coil. NADP(+) contacts are provided by residues 146 to 149 (TPWN), Arg157, 172 to 176 (KPSSD), 204 to 210 (RGSEIGD), 225 to 248 (GSTATGQRIMQKASANMAKLILEL), Cys281, and 381 to 383 (EIF). Substrate is bound by residues Asn149 and Arg157. Catalysis depends on Glu247, which acts as the Proton acceptor. Cys281 lines the substrate pocket. Cys281 serves as the catalytic Proton donor.

The protein belongs to the aldehyde dehydrogenase family. Glyceraldehyde dehydrogenase subfamily. Homotetramer. Dimer of dimers.

The enzyme catalyses D-glyceraldehyde + NADP(+) + H2O = (R)-glycerate + NADPH + 2 H(+). It functions in the pathway carbohydrate degradation; glycolysis. Its activity is regulated as follows. Inhibited by calcium, cadmium, copper and mercury ions. Stable for 2 hours at 60 degrees Celsius but activity is decreased to less than 50 percent within 20 minutes at 80 degrees Celsius. Two folds activity enhancement in the presence of 1 mM glutathione, DTT, or 2-mercaptoethanol. Complete activity inhibition by thiol-modifying reagents such as p-chloromercuribenzoic acid or p-hydroxy-mercuribenzoic acid. Its function is as follows. NADP-dependent dehydrogenase of the nED (non-phosphorylated Entner-Doudoroff) pathway with highest activity towards glyceraldehydes (e.g. D,L-glyceraldehyde and D-glyceraldehyde), to a lesser extent towards D,L-glyceraldehyde-3-phosphate and glycolaldehyde, but no activity towards aliphatic or aromatic aldehydes. The chain is D-glyceraldehyde dehydrogenase (NADP(+)) from Thermoplasma acidophilum (strain ATCC 25905 / DSM 1728 / JCM 9062 / NBRC 15155 / AMRC-C165).